The sequence spans 153 residues: SsrA-binding protein (153 aa).

It belongs to the SmpB family.

The protein resides in the cytoplasm. Required for rescue of stalled ribosomes mediated by trans-translation. Binds to transfer-messenger RNA (tmRNA), required for stable association of tmRNA with ribosomes. tmRNA and SmpB together mimic tRNA shape, replacing the anticodon stem-loop with SmpB. tmRNA is encoded by the ssrA gene; the 2 termini fold to resemble tRNA(Ala) and it encodes a 'tag peptide', a short internal open reading frame. During trans-translation Ala-aminoacylated tmRNA acts like a tRNA, entering the A-site of stalled ribosomes, displacing the stalled mRNA. The ribosome then switches to translate the ORF on the tmRNA; the nascent peptide is terminated with the 'tag peptide' encoded by the tmRNA and targeted for degradation. The ribosome is freed to recommence translation, which seems to be the essential function of trans-translation. This Lactobacillus delbrueckii subsp. bulgaricus (strain ATCC 11842 / DSM 20081 / BCRC 10696 / JCM 1002 / NBRC 13953 / NCIMB 11778 / NCTC 12712 / WDCM 00102 / Lb 14) protein is SsrA-binding protein.